A 512-amino-acid polypeptide reads, in one-letter code: Probable DNA ligase (512 aa).

Residue Glu-208 participates in ATP binding. The N6-AMP-lysine intermediate role is filled by Lys-210. Residues Arg-215, Arg-230, Glu-259, Phe-299, Arg-374, and Lys-380 each coordinate ATP.

Belongs to the ATP-dependent DNA ligase family. It depends on Mg(2+) as a cofactor.

It carries out the reaction ATP + (deoxyribonucleotide)n-3'-hydroxyl + 5'-phospho-(deoxyribonucleotide)m = (deoxyribonucleotide)n+m + AMP + diphosphate.. In terms of biological role, DNA ligase that seals nicks in double-stranded DNA during DNA replication, DNA recombination and DNA repair. This is Probable DNA ligase from Streptomyces avermitilis (strain ATCC 31267 / DSM 46492 / JCM 5070 / NBRC 14893 / NCIMB 12804 / NRRL 8165 / MA-4680).